Here is a 183-residue protein sequence, read N- to C-terminus: Threonylcarbamoyl-AMP synthase (183 aa).

The YrdC-like domain occupies 1–183; sequence MNFTEIAEKL…LLTDQLIREG (183 aa).

It belongs to the SUA5 family. TsaC subfamily.

It is found in the cytoplasm. The enzyme catalyses L-threonine + hydrogencarbonate + ATP = L-threonylcarbamoyladenylate + diphosphate + H2O. Required for the formation of a threonylcarbamoyl group on adenosine at position 37 (t(6)A37) in tRNAs that read codons beginning with adenine. Catalyzes the conversion of L-threonine, HCO(3)(-)/CO(2) and ATP to give threonylcarbamoyl-AMP (TC-AMP) as the acyladenylate intermediate, with the release of diphosphate. The polypeptide is Threonylcarbamoyl-AMP synthase (Actinobacillus succinogenes (strain ATCC 55618 / DSM 22257 / CCUG 43843 / 130Z)).